The following is a 198-amino-acid chain: Suppressor of cytokine signaling 2 (198 aa).

A disordered region spans residues 1–31 (MTLRCLEPSGNGAEGTQSQWGTSGSAEEPSP). Positions 1–75 (MTLRCLEPSG…PEGTFLIRDS (75 aa)) are interaction with AREL1. Over residues 14-25 (EGTQSQWGTSGS) the composition is skewed to polar residues. 2 positions are modified to phosphoserine: S30 and S52. The region spanning 48-156 (WYWGSMTVNE…TVHLYLTKPL (109 aa)) is the SH2 domain. The region spanning 151 to 197 (YLTKPLYTSAPPLQHLCRLTINKCTGTIWGLPLPTRLKDYLEEYKFQ) is the SOCS box domain. Residue K173 forms a Glycyl lysine isopeptide (Lys-Gly) (interchain with G-Cter in ubiquitin) linkage.

As to quaternary structure, substrate-recognition component of the ECS(SOCS2) complex, composed of SOCS2, CUL5, ELOB, ELOC and RNF7/RBX2. Interacts with IGF1R. Interacts with DCUN1D1. In terms of processing, ubiquitinated; mediated by AREL1 and leading to its subsequent proteasomal degradation. Ubiquitination is dependent on its phosphorylation at Ser-52, by PKC. Ubiquitination is stimulated by LPS. Post-translationally, phosphorylation at Ser-52 by PKC facilitates its ubiquitination and proteasomal degradation.

The protein localises to the cytoplasm. It participates in protein modification; protein ubiquitination. Its function is as follows. Substrate-recognition component of a cullin-5-RING E3 ubiquitin-protein ligase complex (ECS complex, also named CRL5 complex), which mediates the ubiquitination and subsequent proteasomal degradation of target proteins, such as EPOR and GHR. Specifically recognizes and binds phosphorylated proteins via its SH2 domain, promoting their ubiquitination. The ECS(SOCS2) complex acts as a key regulator of growth hormone receptor (GHR) levels by mediating ubiquitination and degradation of GHR, following GHR phosphorylation by JAK2. The ECS(SOCS2) also catalyzes ubiquitination and degradation of JAK2-phosphorylated EPOR. In Sus scrofa (Pig), this protein is Suppressor of cytokine signaling 2 (SOCS2).